Here is a 458-residue protein sequence, read N- to C-terminus: UDP-N-acetylmuramate--L-alanine ligase (458 aa).

An ATP-binding site is contributed by 118–124 (GTHGKTT).

The protein belongs to the MurCDEF family.

It is found in the cytoplasm. It carries out the reaction UDP-N-acetyl-alpha-D-muramate + L-alanine + ATP = UDP-N-acetyl-alpha-D-muramoyl-L-alanine + ADP + phosphate + H(+). The protein operates within cell wall biogenesis; peptidoglycan biosynthesis. Cell wall formation. The sequence is that of UDP-N-acetylmuramate--L-alanine ligase from Clostridium botulinum (strain ATCC 19397 / Type A).